We begin with the raw amino-acid sequence, 1339 residues long: Astrotactin-2 (1339 aa).

The first 49 residues, 1–49 (MAAAGARLSPGPGSGLRGRPRLCFHPGPPPLLPLLLLFLLLLPPPPLLA), serve as a signal peptide directing secretion. Topologically, residues 50–206 (GATAAASREP…IVEEQMHILH (157 aa)) are lumenal. Asn-168 is a glycosylation site (N-linked (GlcNAc...) asparagine). A helical membrane pass occupies residues 207–227 (ISVMGGLIALLLLLLVFTVAL). Residues 228–434 (YAQRRWQKRR…KGLLKSPVNK (207 aa)) are Cytoplasmic-facing. 2 disordered regions span residues 296–316 (EEDE…EFGS) and 363–408 (TPIE…ADDE). The chain crosses the membrane as a helical span at residues 435 to 455 (TALTLIAVSSCILAMVCGSQM). Residues 456–1339 (SCPLTVKVTL…RNTYGESKGR (884 aa)) lie on the Lumenal side of the membrane. EGF-like domains are found at residues 510–550 (VRDL…HLCV), 651–695 (PVRD…SGCY), and 699–751 (KGID…KSCL). 9 disulfides stabilise this stretch: Cys-514/Cys-526, Cys-522/Cys-533, Cys-535/Cys-549, Cys-655/Cys-668, Cys-662/Cys-679, Cys-681/Cys-694, Cys-703/Cys-715, Cys-711/Cys-735, and Cys-737/Cys-750. N-linked (GlcNAc...) asparagine glycosylation is found at Asn-770 and Asn-783. 3 disulfide bridges follow: Cys-825-Cys-987, Cys-916-Cys-977, and Cys-983-Cys-990. Asn-1020 is a glycosylation site (N-linked (GlcNAc...) asparagine). 5 disulfide bridges follow: Cys-1036–Cys-1047, Cys-1049–Cys-1062, Cys-1136–Cys-1158, Cys-1190–Cys-1277, and Cys-1298–Cys-1321. The region spanning 1065–1188 (LLQPVLRLSP…SELSTVTLRT (124 aa)) is the Fibronectin type-III domain.

The protein belongs to the astrotactin family. As to quaternary structure, interacts with ASTN1; the interaction is not calcium-dependent.

The protein resides in the membrane. The protein localises to the perikaryon. It localises to the cytoplasm. It is found in the cell cortex. Its subcellular location is the early endosome. The protein resides in the late endosome. The protein localises to the cytoplasmic vesicle. It localises to the clathrin-coated vesicle. Mediates recycling of the neuronal cell adhesion molecule ASTN1 to the anterior pole of the cell membrane in migrating neurons. Promotes ASTN1 internalization and intracellular transport of endocytosed ASTN1. Selectively binds inositol-4,5-bisphosphate, inositol-3,4,5-trisphosphate and inositol-1,3,4,5-tetrakisphosphate, suggesting it is recruited to membranes that contain lipids with a phosphoinositide headgroup. The polypeptide is Astrotactin-2 (ASTN2) (Homo sapiens (Human)).